Reading from the N-terminus, the 165-residue chain is Crossover junction endodeoxyribonuclease RuvC (165 aa).

Residues D8, E69, and H141 contribute to the active site. Positions 8, 69, and 141 each coordinate Mg(2+).

It belongs to the RuvC family. In terms of assembly, homodimer which binds Holliday junction (HJ) DNA. The HJ becomes 2-fold symmetrical on binding to RuvC with unstacked arms; it has a different conformation from HJ DNA in complex with RuvA. In the full resolvosome a probable DNA-RuvA(4)-RuvB(12)-RuvC(2) complex forms which resolves the HJ. It depends on Mg(2+) as a cofactor.

The protein localises to the cytoplasm. It catalyses the reaction Endonucleolytic cleavage at a junction such as a reciprocal single-stranded crossover between two homologous DNA duplexes (Holliday junction).. The RuvA-RuvB-RuvC complex processes Holliday junction (HJ) DNA during genetic recombination and DNA repair. Endonuclease that resolves HJ intermediates. Cleaves cruciform DNA by making single-stranded nicks across the HJ at symmetrical positions within the homologous arms, yielding a 5'-phosphate and a 3'-hydroxyl group; requires a central core of homology in the junction. The consensus cleavage sequence is 5'-(A/T)TT(C/G)-3'. Cleavage occurs on the 3'-side of the TT dinucleotide at the point of strand exchange. HJ branch migration catalyzed by RuvA-RuvB allows RuvC to scan DNA until it finds its consensus sequence, where it cleaves and resolves the cruciform DNA. This Wolbachia pipientis subsp. Culex pipiens (strain wPip) protein is Crossover junction endodeoxyribonuclease RuvC.